A 280-amino-acid polypeptide reads, in one-letter code: Four and a half LIM domains protein 3 (280 aa).

Ser2 is modified (N-acetylserine). A C4-type zinc finger spans residues 7–31; the sequence is CAKCSESLYGRKYIQTDDGPYCVPC. LIM zinc-binding domains are found at residues 40 to 92 and 101 to 153; these read CAEC…CNDC and CSAC…CVPC. Position 157 is an N6-acetyllysine (Lys157). LIM zinc-binding domains are found at residues 162–212 and 221–275; these read CARC…CVTC and CSSC…CQGC. Lys235 bears the N6-acetyllysine mark.

As to quaternary structure, interacts with SOX15; the interaction recruits FHL3 to FOXK1 promoters where it acts as a transcriptional coactivator of FOXK1.

It localises to the nucleus. The protein localises to the cytoplasm. Its function is as follows. Recruited by SOX15 to FOXK1 promoters where it acts as a transcriptional coactivator of FOXK1. In Bos taurus (Bovine), this protein is Four and a half LIM domains protein 3 (FHL3).